Reading from the N-terminus, the 311-residue chain is Methionyl-tRNA formyltransferase (311 aa).

Position 112 to 115 (112 to 115 (SLLP)) interacts with (6S)-5,6,7,8-tetrahydrofolate.

Belongs to the Fmt family.

It catalyses the reaction L-methionyl-tRNA(fMet) + (6R)-10-formyltetrahydrofolate = N-formyl-L-methionyl-tRNA(fMet) + (6S)-5,6,7,8-tetrahydrofolate + H(+). Its function is as follows. Attaches a formyl group to the free amino group of methionyl-tRNA(fMet). The formyl group appears to play a dual role in the initiator identity of N-formylmethionyl-tRNA by promoting its recognition by IF2 and preventing the misappropriation of this tRNA by the elongation apparatus. This Geobacter metallireducens (strain ATCC 53774 / DSM 7210 / GS-15) protein is Methionyl-tRNA formyltransferase.